The chain runs to 360 residues: Aminomethyltransferase (360 aa).

The protein belongs to the GcvT family. In terms of assembly, the glycine cleavage system is composed of four proteins: P, T, L and H.

It carries out the reaction N(6)-[(R)-S(8)-aminomethyldihydrolipoyl]-L-lysyl-[protein] + (6S)-5,6,7,8-tetrahydrofolate = N(6)-[(R)-dihydrolipoyl]-L-lysyl-[protein] + (6R)-5,10-methylene-5,6,7,8-tetrahydrofolate + NH4(+). Its function is as follows. The glycine cleavage system catalyzes the degradation of glycine. In Pseudomonas putida (strain ATCC 47054 / DSM 6125 / CFBP 8728 / NCIMB 11950 / KT2440), this protein is Aminomethyltransferase.